The primary structure comprises 74 residues: Small ribosomal subunit protein bS18 (74 aa).

The protein belongs to the bacterial ribosomal protein bS18 family. As to quaternary structure, part of the 30S ribosomal subunit. Forms a tight heterodimer with protein bS6.

Its function is as follows. Binds as a heterodimer with protein bS6 to the central domain of the 16S rRNA, where it helps stabilize the platform of the 30S subunit. This chain is Small ribosomal subunit protein bS18, found in Coprothermobacter proteolyticus (strain ATCC 35245 / DSM 5265 / OCM 4 / BT).